Reading from the N-terminus, the 242-residue chain is Probable transcriptional regulatory protein EUBREC_1961 (242 aa).

This sequence belongs to the TACO1 family.

The protein resides in the cytoplasm. The polypeptide is Probable transcriptional regulatory protein EUBREC_1961 (Agathobacter rectalis (strain ATCC 33656 / DSM 3377 / JCM 17463 / KCTC 5835 / VPI 0990) (Eubacterium rectale)).